The sequence spans 526 residues: ATP synthase subunit alpha (526 aa).

Position 171–178 (171–178) interacts with ATP; sequence GDRQTGKT.

The protein belongs to the ATPase alpha/beta chains family. In terms of assembly, F-type ATPases have 2 components, CF(1) - the catalytic core - and CF(0) - the membrane proton channel. CF(1) has five subunits: alpha(3), beta(3), gamma(1), delta(1), epsilon(1). CF(0) has three main subunits: a(1), b(2) and c(9-12). The alpha and beta chains form an alternating ring which encloses part of the gamma chain. CF(1) is attached to CF(0) by a central stalk formed by the gamma and epsilon chains, while a peripheral stalk is formed by the delta and b chains.

The protein resides in the cell inner membrane. The catalysed reaction is ATP + H2O + 4 H(+)(in) = ADP + phosphate + 5 H(+)(out). Its function is as follows. Produces ATP from ADP in the presence of a proton gradient across the membrane. The alpha chain is a regulatory subunit. This chain is ATP synthase subunit alpha, found in Cytophaga hutchinsonii (strain ATCC 33406 / DSM 1761 / CIP 103989 / NBRC 15051 / NCIMB 9469 / D465).